The sequence spans 489 residues: MSAEVTHTGQHPETGALTRRIMGVETEYGITCMDGEVRRLRPDEIAKYLFRPVVDKYSSSNIFIPNASRLYLDVGSHPEYATAECDSLTQLINAEKAGDVIVNRMAVEAEAALAREGIGGQVYLFKNNVDSIGNSYGCHENYLVRREVSLKALGRRLMPFLITRQLISGAGMIQHPNPMSKGEGFPLGYCISQRADHVWEGVSSATTRSRPIINTRDEPHADSHRYRRLHVIVGDANMAEPTIALKVGSTLLVLEMIEADFGLPDMELSNDIESIREIARDQTGRIPLKLKDGTTRSALEIQQVVFDHARRWLDHRVESRGTSNEEMARVLDLWGRMLSAIETQDFSQVDQEIDWVIKKKLLDRYQTRGNLGLDDPRLAQIDLTYHDIRPGRGLFSVLQNRGMITRWTTDEAINHAVDHAPETTRAHLRGRILKAADKLGAPVTVDWMRHKVNRPDPQLVELSDPFSPVDAEVDALIAYMEAHAETYRT.

Glu-25 lines the Mg(2+) pocket. Residue Arg-69 coordinates ATP. A Mg(2+)-binding site is contributed by Tyr-71. The Proton acceptor role is filled by Asp-73. Mg(2+) is bound at residue Glu-79. Thr-82 and Trp-447 together coordinate ATP.

It belongs to the Pup ligase/Pup deamidase family. Pup-conjugating enzyme subfamily.

It carries out the reaction ATP + [prokaryotic ubiquitin-like protein]-L-glutamate + [protein]-L-lysine = ADP + phosphate + N(6)-([prokaryotic ubiquitin-like protein]-gamma-L-glutamyl)-[protein]-L-lysine.. It participates in protein degradation; proteasomal Pup-dependent pathway. Its pathway is protein modification; protein pupylation. Catalyzes the covalent attachment of the prokaryotic ubiquitin-like protein modifier Pup to the proteasomal substrate proteins, thereby targeting them for proteasomal degradation. This tagging system is termed pupylation. The ligation reaction involves the side-chain carboxylate of the C-terminal glutamate of Pup and the side-chain amino group of a substrate lysine. The polypeptide is Pup--protein ligase (Corynebacterium efficiens (strain DSM 44549 / YS-314 / AJ 12310 / JCM 11189 / NBRC 100395)).